We begin with the raw amino-acid sequence, 143 residues long: Nucleoside diphosphate kinase (143 aa).

Positions 11, 59, 87, 93, 104, and 114 each coordinate ATP. The Pros-phosphohistidine intermediate role is filled by His-117.

Belongs to the NDK family. In terms of assembly, homotetramer. Requires Mg(2+) as cofactor.

The protein resides in the cytoplasm. The catalysed reaction is a 2'-deoxyribonucleoside 5'-diphosphate + ATP = a 2'-deoxyribonucleoside 5'-triphosphate + ADP. The enzyme catalyses a ribonucleoside 5'-diphosphate + ATP = a ribonucleoside 5'-triphosphate + ADP. In terms of biological role, major role in the synthesis of nucleoside triphosphates other than ATP. The ATP gamma phosphate is transferred to the NDP beta phosphate via a ping-pong mechanism, using a phosphorylated active-site intermediate. This chain is Nucleoside diphosphate kinase, found in Thioalkalivibrio sulfidiphilus (strain HL-EbGR7).